Consider the following 373-residue polypeptide: Dual-specificity RNA methyltransferase RlmN (373 aa).

Glutamate 94 serves as the catalytic Proton acceptor. One can recognise a Radical SAM core domain in the interval 100-339 (EDDRATLCVS…VIVRKTRGDD (240 aa)). Residues cysteine 107 and cysteine 344 are joined by a disulfide bond. [4Fe-4S] cluster-binding residues include cysteine 114, cysteine 118, and cysteine 121. Residues 168-169 (GE), serine 200, 222-224 (SIH), and asparagine 301 contribute to the S-adenosyl-L-methionine site. The active-site S-methylcysteine intermediate is the cysteine 344.

It belongs to the radical SAM superfamily. RlmN family. Requires [4Fe-4S] cluster as cofactor.

The protein localises to the cytoplasm. It carries out the reaction adenosine(2503) in 23S rRNA + 2 reduced [2Fe-2S]-[ferredoxin] + 2 S-adenosyl-L-methionine = 2-methyladenosine(2503) in 23S rRNA + 5'-deoxyadenosine + L-methionine + 2 oxidized [2Fe-2S]-[ferredoxin] + S-adenosyl-L-homocysteine. The enzyme catalyses adenosine(37) in tRNA + 2 reduced [2Fe-2S]-[ferredoxin] + 2 S-adenosyl-L-methionine = 2-methyladenosine(37) in tRNA + 5'-deoxyadenosine + L-methionine + 2 oxidized [2Fe-2S]-[ferredoxin] + S-adenosyl-L-homocysteine. Specifically methylates position 2 of adenine 2503 in 23S rRNA and position 2 of adenine 37 in tRNAs. m2A2503 modification seems to play a crucial role in the proofreading step occurring at the peptidyl transferase center and thus would serve to optimize ribosomal fidelity. The protein is Dual-specificity RNA methyltransferase RlmN of Shewanella baltica (strain OS185).